The sequence spans 427 residues: METKIEKVLKILEEEIVAAEGCTEPIALSYAAAKARRILGTVPNKVDVFLSGNIIKNVKSVTIPNSEGMIGIEPAIAMGLIAGDDKKELMVISDTTHEQVQEVRDFLDKKLIKTHVYPGDIKLYIRLEISNGENNVLLEIKHTHTNITRILKNDKVLLSQICNDGDFNSSLTDRKVLSVKYIYDLAKTIDIDLIKPIFQKVIRYNSAIADEGLKGKYGVNIGKMILDNIEKGIYGNDVRNKAASYASAGSDARMSGCALPVMTTSGSGNQGMTASLPVIKFAAEKNLSEEELIRGLFVSHLITIHVKTNVGRLSAYCGAICAASGVAAALTFLHGGSFEMVCDAITNILGNLSGVICDGAKASCAMKISSGIYSAFDATMLALNKDVLKSGDGIVGVDIEETIRNVGELAQCGMKGTDETILGIMTK.

It belongs to the UPF0597 family.

The polypeptide is UPF0597 protein FN1147 (Fusobacterium nucleatum subsp. nucleatum (strain ATCC 25586 / DSM 15643 / BCRC 10681 / CIP 101130 / JCM 8532 / KCTC 2640 / LMG 13131 / VPI 4355)).